We begin with the raw amino-acid sequence, 375 residues long: CCN family member 1 (375 aa).

The N-terminal stretch at 1 to 22 (MGSAGARPALAAALLCLARLAL) is a signal peptide. One can recognise an IGFBP N-terminal domain in the interval 23–94 (GSPCPAVCQC…AATNGICRAQ (72 aa)). Disulfide bonds link Cys26-Cys50, Cys30-Cys52, Cys32-Cys53, Cys39-Cys56, Cys64-Cys78, and Cys70-Cys91. The VWFC domain occupies 98–164 (RPCEYNSKIY…GQCCEEWVCD (67 aa)). A TSP type-1 domain is found at 223 to 268 (KCIVQTTSWSQCSKTCGTGISTRVTNDNPDCKLIKETRICEVRPCG). Positions 274 to 310 (SLKKGKKCTKTKKSPSPVRFTYAGCSSVKKYRPKYCG) are heparin-binding. Intrachain disulfides connect Cys281/Cys318, Cys298/Cys332, Cys309/Cys348, Cys312/Cys350, and Cys317/Cys354. In terms of domain architecture, CTCK spans 281 to 355 (CTKTKKSPSP…QSCRCNYNCP (75 aa)).

It belongs to the CCN family.

It is found in the secreted. Its function is as follows. Probable secreted regulatory protein. This Gallus gallus (Chicken) protein is CCN family member 1 (CCN1).